The chain runs to 99 residues: Integration host factor subunit alpha (99 aa).

This sequence belongs to the bacterial histone-like protein family. Heterodimer of an alpha and a beta chain.

Its function is as follows. This protein is one of the two subunits of integration host factor, a specific DNA-binding protein that functions in genetic recombination as well as in transcriptional and translational control. This is Integration host factor subunit alpha from Thioalkalivibrio sulfidiphilus (strain HL-EbGR7).